Reading from the N-terminus, the 681-residue chain is DNA ligase (681 aa).

NAD(+) is bound by residues aspartate 45 to aspartate 49, serine 94 to leucine 95, and glutamate 120. The N6-AMP-lysine intermediate role is filled by lysine 122. Positions 143, 177, 289, and 313 each coordinate NAD(+). Zn(2+) contacts are provided by cysteine 403, cysteine 406, cysteine 421, and cysteine 426. The BRCT domain occupies serine 593–isoleucine 681.

The protein belongs to the NAD-dependent DNA ligase family. LigA subfamily. It depends on Mg(2+) as a cofactor. The cofactor is Mn(2+).

It catalyses the reaction NAD(+) + (deoxyribonucleotide)n-3'-hydroxyl + 5'-phospho-(deoxyribonucleotide)m = (deoxyribonucleotide)n+m + AMP + beta-nicotinamide D-nucleotide.. Its function is as follows. DNA ligase that catalyzes the formation of phosphodiester linkages between 5'-phosphoryl and 3'-hydroxyl groups in double-stranded DNA using NAD as a coenzyme and as the energy source for the reaction. It is essential for DNA replication and repair of damaged DNA. This is DNA ligase from Leptospira borgpetersenii serovar Hardjo-bovis (strain JB197).